We begin with the raw amino-acid sequence, 347 residues long: CRISPR-associated endonuclease Cas1 4 (347 aa).

Positions 1-21 (MNIENEVHIENASESKREPKP) are enriched in basic and acidic residues. Positions 1-25 (MNIENEVHIENASESKREPKPPEGL) are disordered. Mn(2+) contacts are provided by E176, H241, and E256.

It belongs to the CRISPR-associated endonuclease Cas1 family. As to quaternary structure, homodimer, forms a heterotetramer with a Cas2 homodimer. Requires Mg(2+) as cofactor. Mn(2+) serves as cofactor.

In terms of biological role, CRISPR (clustered regularly interspaced short palindromic repeat), is an adaptive immune system that provides protection against mobile genetic elements (viruses, transposable elements and conjugative plasmids). CRISPR clusters contain spacers, sequences complementary to antecedent mobile elements, and target invading nucleic acids. CRISPR clusters are transcribed and processed into CRISPR RNA (crRNA). Acts as a dsDNA endonuclease. Involved in the integration of spacer DNA into the CRISPR cassette. The protein is CRISPR-associated endonuclease Cas1 4 of Methanospirillum hungatei JF-1 (strain ATCC 27890 / DSM 864 / NBRC 100397 / JF-1).